A 299-amino-acid polypeptide reads, in one-letter code: Sulfate adenylyltransferase subunit 2 (299 aa).

Belongs to the PAPS reductase family. CysD subfamily. Sulfate-activating enzymes, NodP and NodQ, may be physically associated.

It catalyses the reaction sulfate + ATP + H(+) = adenosine 5'-phosphosulfate + diphosphate. Functionally, proposed to provide activated sulfate for transfer to nod factor. The chain is Sulfate adenylyltransferase subunit 2 (nodP) from Rhizobium tropici.